Consider the following 83-residue polypeptide: Cytochrome c5 (83 aa).

Residues cysteine 15, cysteine 18, histidine 19, and methionine 59 each contribute to the heme c site. A disulfide bond links cysteine 65 and cysteine 68.

The protein belongs to the cytochrome c family. As to quaternary structure, homodimer. Binds 1 heme c group covalently per subunit.

It is unreactive with cytochrome c reductase or oxidase. This Azotobacter vinelandii protein is Cytochrome c5.